The chain runs to 576 residues: Proline--tRNA ligase (576 aa).

This sequence belongs to the class-II aminoacyl-tRNA synthetase family. ProS type 1 subfamily. Homodimer.

The protein resides in the cytoplasm. The catalysed reaction is tRNA(Pro) + L-proline + ATP = L-prolyl-tRNA(Pro) + AMP + diphosphate. In terms of biological role, catalyzes the attachment of proline to tRNA(Pro) in a two-step reaction: proline is first activated by ATP to form Pro-AMP and then transferred to the acceptor end of tRNA(Pro). As ProRS can inadvertently accommodate and process non-cognate amino acids such as alanine and cysteine, to avoid such errors it has two additional distinct editing activities against alanine. One activity is designated as 'pretransfer' editing and involves the tRNA(Pro)-independent hydrolysis of activated Ala-AMP. The other activity is designated 'posttransfer' editing and involves deacylation of mischarged Ala-tRNA(Pro). The misacylated Cys-tRNA(Pro) is not edited by ProRS. This chain is Proline--tRNA ligase, found in Psychrobacter sp. (strain PRwf-1).